Consider the following 208-residue polypeptide: Small ribosomal subunit protein uS4 (208 aa).

An S4 RNA-binding domain is found at 98–161; the sequence is LRLDNVVFRL…RKVVRISEAL (64 aa).

It belongs to the universal ribosomal protein uS4 family. As to quaternary structure, part of the 30S ribosomal subunit. Contacts protein S5. The interaction surface between S4 and S5 is involved in control of translational fidelity.

Functionally, one of the primary rRNA binding proteins, it binds directly to 16S rRNA where it nucleates assembly of the body of the 30S subunit. Its function is as follows. With S5 and S12 plays an important role in translational accuracy. The polypeptide is Small ribosomal subunit protein uS4 (Anaeromyxobacter sp. (strain Fw109-5)).